The following is a 498-amino-acid chain: UDP-N-acetylmuramate--L-alanine ligase (498 aa).

122–128 (GTHGKTS) serves as a coordination point for ATP.

The protein belongs to the MurCDEF family.

The protein localises to the cytoplasm. It catalyses the reaction UDP-N-acetyl-alpha-D-muramate + L-alanine + ATP = UDP-N-acetyl-alpha-D-muramoyl-L-alanine + ADP + phosphate + H(+). It functions in the pathway cell wall biogenesis; peptidoglycan biosynthesis. Its function is as follows. Cell wall formation. In Corynebacterium jeikeium (strain K411), this protein is UDP-N-acetylmuramate--L-alanine ligase.